We begin with the raw amino-acid sequence, 419 residues long: 26S proteasome regulatory subunit 8 homolog A (419 aa).

An N-acetylalanine modification is found at Ala-2. 202–209 (GPPGTGKT) is an ATP binding site. A Glycyl lysine isopeptide (Lys-Gly) (interchain with G-Cter in ubiquitin) cross-link involves residue Lys-406.

This sequence belongs to the AAA ATPase family. Component of the 19S regulatory particle (RP/PA700) base subcomplex of the 26S proteasome. The 26S proteasome is composed of a core protease (CP), known as the 20S proteasome, capped at one or both ends by the 19S regulatory particle (RP/PA700). The RP/PA700 complex is composed of at least 17 different subunits in two subcomplexes, the base and the lid, which form the portions proximal and distal to the 20S proteolytic core, respectively.

The protein localises to the cytoplasm. It is found in the nucleus. The 26S proteasome is involved in the ATP-dependent degradation of ubiquitinated proteins. The regulatory (or ATPase) complex confers ATP dependency and substrate specificity to the 26S complex. This Arabidopsis thaliana (Mouse-ear cress) protein is 26S proteasome regulatory subunit 8 homolog A (RPT6A).